The sequence spans 106 residues: uncharacterized protein (106 aa).

Positions 38 to 106 are disordered; the sequence is KGNKKSKAAT…STHLPYHGSY (69 aa). 2 stretches are compositionally biased toward basic and acidic residues: residues 57–71 and 82–96; these read TRQERDLTDRKHRPE and WKKEVTTRSRPKETS.

The protein resides in the mitochondrion. This is an uncharacterized protein from Arabidopsis thaliana (Mouse-ear cress).